The sequence spans 396 residues: S-adenosylmethionine synthase 3 (396 aa).

A Mg(2+)-binding site is contributed by Glu-12. His-18 provides a ligand contact to ATP. Glu-46 contacts K(+). Residues Glu-59 and Gln-102 each contribute to the L-methionine site. ATP is bound by residues 170-172 (DGK), 238-241 (SGRF), Asp-249, 255-256 (RK), Ala-272, Lys-276, and Lys-280. Asp-249 contacts L-methionine. Lys-280 is a binding site for L-methionine.

This sequence belongs to the AdoMet synthase family. Homotetramer. Mn(2+) is required as a cofactor. The cofactor is Mg(2+). Co(2+) serves as cofactor. Requires K(+) as cofactor.

Its subcellular location is the cytoplasm. The catalysed reaction is L-methionine + ATP + H2O = S-adenosyl-L-methionine + phosphate + diphosphate. The protein operates within amino-acid biosynthesis; S-adenosyl-L-methionine biosynthesis; S-adenosyl-L-methionine from L-methionine: step 1/1. Catalyzes the formation of S-adenosylmethionine from methionine and ATP. The reaction comprises two steps that are both catalyzed by the same enzyme: formation of S-adenosylmethionine (AdoMet) and triphosphate, and subsequent hydrolysis of the triphosphate. The protein is S-adenosylmethionine synthase 3 (METK3) of Oryza sativa subsp. japonica (Rice).